The primary structure comprises 429 residues: 3-phosphoshikimate 1-carboxyvinyltransferase (429 aa).

The 3-phosphoshikimate site is built by K11, S12, and R16. K11 is a phosphoenolpyruvate binding site. Phosphoenolpyruvate is bound by residues G82 and R110. The 3-phosphoshikimate site is built by S155, Q157, D302, and K329. Q157 lines the phosphoenolpyruvate pocket. The active-site Proton acceptor is the D302. Phosphoenolpyruvate is bound by residues R333 and R385.

The protein belongs to the EPSP synthase family. In terms of assembly, monomer.

The protein resides in the cytoplasm. It catalyses the reaction 3-phosphoshikimate + phosphoenolpyruvate = 5-O-(1-carboxyvinyl)-3-phosphoshikimate + phosphate. It participates in metabolic intermediate biosynthesis; chorismate biosynthesis; chorismate from D-erythrose 4-phosphate and phosphoenolpyruvate: step 6/7. Its function is as follows. Catalyzes the transfer of the enolpyruvyl moiety of phosphoenolpyruvate (PEP) to the 5-hydroxyl of shikimate-3-phosphate (S3P) to produce enolpyruvyl shikimate-3-phosphate and inorganic phosphate. This chain is 3-phosphoshikimate 1-carboxyvinyltransferase, found in Helicobacter pylori (strain J99 / ATCC 700824) (Campylobacter pylori J99).